The chain runs to 801 residues: Mitochondrial intermediate peptidase (801 aa).

The transit peptide at 1-41 directs the protein to the mitochondrion; that stretch reads MKDQLLVPLRRRPWTCQKCLQRLQLPRHQTRRSFETAASPF. Histidine 564 lines the Zn(2+) pocket. The active site involves glutamate 565. The Zn(2+) site is built by histidine 568 and histidine 571.

Belongs to the peptidase M3 family. The cofactor is Zn(2+).

It is found in the mitochondrion matrix. The enzyme catalyses Release of an N-terminal octapeptide as second stage of processing of some proteins imported into the mitochondrion.. In terms of biological role, cleaves proteins, imported into the mitochondrion, to their mature size. While most mitochondrial precursor proteins are processed to the mature form in one step by mitochondrial processing peptidase (MPP), the sequential cleavage by MIP of an octapeptide after initial processing by MPP is a required step for a subgroup of nuclear-encoded precursor proteins destined for the matrix or the inner membrane. The sequence is that of Mitochondrial intermediate peptidase (oct1) from Aspergillus fumigatus (strain CBS 144.89 / FGSC A1163 / CEA10) (Neosartorya fumigata).